Reading from the N-terminus, the 169-residue chain is Allophycocyanin subunit beta-18 (169 aa).

At N72 the chain carries N4-methylasparagine. (2R,3E)-phycocyanobilin is bound at residue C82.

This sequence belongs to the phycobiliprotein family. Heterodimer of ApcE and this beta chain. Post-translationally, contains one covalently linked bilin chromophore.

The protein localises to the cellular thylakoid membrane. Its function is as follows. A variant beta-allophycocyanin (AP) which forms a complex with ApcE, a phycobilisome terminal emitter that influences energy transfer to photosystem II. The chain is Allophycocyanin subunit beta-18 (apcF) from Synechocystis sp. (strain ATCC 27184 / PCC 6803 / Kazusa).